The sequence spans 58 residues: Small ribosomal subunit protein bS21 (58 aa).

The tract at residues 34–58 (KREHYESPSVRRKKKSEAARRRKRR) is disordered. The span at 43-58 (VRRKKKSEAARRRKRR) shows a compositional bias: basic residues.

This sequence belongs to the bacterial ribosomal protein bS21 family.

This Caldicellulosiruptor bescii (strain ATCC BAA-1888 / DSM 6725 / KCTC 15123 / Z-1320) (Anaerocellum thermophilum) protein is Small ribosomal subunit protein bS21.